A 260-amino-acid chain; its full sequence is Imidazole glycerol phosphate synthase subunit HisF (260 aa).

Residues aspartate 11 and aspartate 130 contribute to the active site.

Belongs to the HisA/HisF family. As to quaternary structure, heterodimer of HisH and HisF.

The protein resides in the cytoplasm. It carries out the reaction 5-[(5-phospho-1-deoxy-D-ribulos-1-ylimino)methylamino]-1-(5-phospho-beta-D-ribosyl)imidazole-4-carboxamide + L-glutamine = D-erythro-1-(imidazol-4-yl)glycerol 3-phosphate + 5-amino-1-(5-phospho-beta-D-ribosyl)imidazole-4-carboxamide + L-glutamate + H(+). The protein operates within amino-acid biosynthesis; L-histidine biosynthesis; L-histidine from 5-phospho-alpha-D-ribose 1-diphosphate: step 5/9. IGPS catalyzes the conversion of PRFAR and glutamine to IGP, AICAR and glutamate. The HisF subunit catalyzes the cyclization activity that produces IGP and AICAR from PRFAR using the ammonia provided by the HisH subunit. The chain is Imidazole glycerol phosphate synthase subunit HisF from Desulfatibacillum aliphaticivorans.